The sequence spans 322 residues: Allergen Asp f 4 (322 aa).

The N-terminal stretch at 1 to 20 (MQLKNSMLLLTALAAGSSVA) is a signal peptide. The span at 80–105 (AAAAAASTPEPSSSHSDSSSSSGVSA) shows a compositional bias: low complexity. The segment at 80–109 (AAAAAASTPEPSSSHSDSSSSSGVSADWTN) is disordered.

It is found in the secreted. The chain is Allergen Asp f 4 from Aspergillus fumigatus (strain ATCC MYA-4609 / CBS 101355 / FGSC A1100 / Af293) (Neosartorya fumigata).